Here is a 63-residue protein sequence, read N- to C-terminus: Crotasin (63 aa).

An N-terminal signal peptide occupies residues 1 to 22 (MKILYLLSAFLFLAFLSESGNA). 3 disulfide bridges follow: Cys26–Cys56, Cys33–Cys50, and Cys38–Cys57.

As to expression, highly expressed in pancreas, heart, liver, brain and kidney. Expressed to a low extent in the venom gland.

The protein localises to the secreted. The chain is Crotasin from Crotalus durissus terrificus (South American rattlesnake).